Consider the following 1652-residue polypeptide: Maestro heat-like repeat-containing protein family member 1 (1652 aa).

HEAT repeat units lie at residues 3–41 (ETYAKRLSAILLDAVTDKDPQMQEQVCGALCDFGESKPA), 260–300 (EEQL…VGSR), 344–382 (CCSPDRLLAFLLPKLDTSNERTRVGTLQVLRHVINAAAA), 385–423 (EVKKPVILSSMKLPLLDTNNKVKRAVVQVVSAMAHHGYL), 1369–1407 (LMLLESLLYNLMARQKDTSARVRRLVLHGLANITLGSPD), 1410–1448 (QTHSPQLLTAMIGGLDDGDDPHSLVALEAMVGLARLMDL), and 1616–1652 (QVDLEQLLTALQLLLKDPALKVRLKAVKTLGRLVKFA).

Belongs to the MROH1 family. Homooligomer; homooligomerizes at lysosome scission sites.

It localises to the lysosome membrane. Functionally, lysosome fission factor. Recruited to lysosomes by RAB7 (RAB7A or RAB7B) at scission sites and homooligomerizes to mediate the constriction and scission of lysosomal tubules. May sever membranes by inserting amphipathic helices into one bilayer leaflet. Lysosome fission is required to maintain their steady-state number, shape, size, composition and function, and to accomplish regeneration. The chain is Maestro heat-like repeat-containing protein family member 1 (MROH1) from Bos taurus (Bovine).